Consider the following 638-residue polypeptide: Signal recognition particle receptor subunit alpha (638 aa).

Disordered regions lie at residues 132-244 and 283-316; these read APTT…GKKA and GTGS…TKGT. Composition is skewed to basic and acidic residues over residues 137–146 and 153–165; these read KKFEDSEKAK and IETR…EKAK. Ser-177 bears the Phosphoserine mark. The span at 204–239 shows a compositional bias: basic and acidic residues; it reads LSKEELIRRKREEFIQKHGRGMEKSNKSTKSDAPKE. Thr-284 carries the phosphothreonine modification. 3 positions are modified to phosphoserine: Ser-296, Ser-297, and Ser-298. A compositionally biased stretch (polar residues) spans 304–314; the sequence is AQNSTKPSATK. The interval 419-636 is NG domain; that stretch reads YVVTFCGVNG…NAKAVVAALM (218 aa). 425-432 is a GTP binding site; it reads GVNGVGKS. Position 473 is a phosphoserine (Ser-473). 520-524 serves as a coordination point for GTP; that stretch reads DTAGR. Thr-578 bears the Phosphothreonine mark. 588–591 is a binding site for GTP; it reads TKFD.

It belongs to the GTP-binding SRP family. Heterodimer with SRPRB. Interacts with the signal recognition particle (SRP) complex subunit SRP54. As to quaternary structure, (Microbial infection) May interact with Zika virus strain Mr-766 non-structural protein 4A/NS4A. May interact with Zika virus French Polynesia 10087PF/2013 non-structural protein 4A/NS4A. In terms of assembly, (Microbial infection) May interact with Dengue virus DENV2 16681 non-structural protein 4A/NS4A.

It localises to the endoplasmic reticulum membrane. In terms of biological role, component of the signal recognition particle (SRP) complex receptor (SR). Ensures, in conjunction with the SRP complex, the correct targeting of the nascent secretory proteins to the endoplasmic reticulum membrane system. Forms a guanosine 5'-triphosphate (GTP)-dependent complex with the SRP subunit SRP54. SRP receptor compaction and GTPase rearrangement drive SRP-mediated cotranslational protein translocation into the ER. The chain is Signal recognition particle receptor subunit alpha from Homo sapiens (Human).